The primary structure comprises 567 residues: MTLNGWIQILVFCGIIGLLTKPLGFYMHRVFNGDRTPLSPIFGPLERGLYRICGTSEREEQHWTAYAVALLLFNLAGFLVLYALQRLQGSLPYNPAGMGAVDPALAFNTAASFVTNTNWQNYGGESTMSYLLQMAGLTVQNFVSAATGIAIAIALIRGFARASGKSIGNFWVDMTRCTLYVLLPLCIVLTLVYVWLGIPQTLGPYVDATTLEGAKQTIALGPVASQVAIKMLGTNGGGFFNANAAHPFENPDAISNLIQMVTIFALGAALTNVFGRMVGNQRQGWAILASMGALFIAGVAVCYWAEAAGNPLVHALGLDGGNMEGKETRFGIALSALFAVITTAASCGAVNAMHDSFTALGGMIPLINMQLGEVIVGGVGAGFYGILMFIVVAVFVAGLMVGRTPEYLGKKIEAKEVKMAMLAILCLPLAMLIFTAIAVVLPSAVASIANGGPHGFSEVLYAYTSAAANNGSAFGGLSGNTPWYNITIGIGMLMGRFLVIIPALAIAGSLAAKKTVPASAGTFPTDGPLFVGLLIGVIVIVGGLTFFPALAVGPIIEHLAMIHGQTF.

11 helical membrane-spanning segments follow: residues 5 to 25 (GWIQ…PLGF), 64 to 84 (TAYA…LYAL), 136 to 156 (GLTV…IALI), 179 to 199 (LYVL…LGIP), 254 to 274 (ISNL…TNVF), 285 to 305 (WAIL…CYWA), 330 to 350 (FGIA…CGAV), 357 to 376 (FTAL…EVIV), 421 to 441 (MLAI…AVVL), 486 to 506 (ITIG…ALAI), and 529 to 549 (LFVG…FFPA).

This sequence belongs to the KdpA family. In terms of assembly, the system is composed of three essential subunits: KdpA, KdpB and KdpC.

It is found in the cell inner membrane. Functionally, part of the high-affinity ATP-driven potassium transport (or Kdp) system, which catalyzes the hydrolysis of ATP coupled with the electrogenic transport of potassium into the cytoplasm. This subunit binds the periplasmic potassium ions and delivers the ions to the membrane domain of KdpB through an intramembrane tunnel. This is Potassium-transporting ATPase potassium-binding subunit from Mesorhizobium japonicum (strain LMG 29417 / CECT 9101 / MAFF 303099) (Mesorhizobium loti (strain MAFF 303099)).